A 320-amino-acid polypeptide reads, in one-letter code: Malate dehydrogenase (320 aa).

Residues 10–15 (GSGMIG) and D34 each bind NAD(+). 2 residues coordinate substrate: R83 and R89. NAD(+) contacts are provided by residues N96 and 119 to 121 (ITN). Substrate-binding residues include N121 and R152. The active-site Proton acceptor is the H176.

It belongs to the LDH/MDH superfamily. MDH type 3 family.

It carries out the reaction (S)-malate + NAD(+) = oxaloacetate + NADH + H(+). In terms of biological role, catalyzes the reversible oxidation of malate to oxaloacetate. This Rhizobium meliloti (strain 1021) (Ensifer meliloti) protein is Malate dehydrogenase.